The following is a 171-amino-acid chain: 3-hydroxydecanoyl-[acyl-carrier-protein] dehydratase (171 aa).

His70 is a catalytic residue.

It belongs to the thioester dehydratase family. FabA subfamily. As to quaternary structure, homodimer.

The protein resides in the cytoplasm. It carries out the reaction a (3R)-hydroxyacyl-[ACP] = a (2E)-enoyl-[ACP] + H2O. The catalysed reaction is (3R)-hydroxydecanoyl-[ACP] = (2E)-decenoyl-[ACP] + H2O. It catalyses the reaction (2E)-decenoyl-[ACP] = (3Z)-decenoyl-[ACP]. It participates in lipid metabolism; fatty acid biosynthesis. Functionally, necessary for the introduction of cis unsaturation into fatty acids. Catalyzes the dehydration of (3R)-3-hydroxydecanoyl-ACP to E-(2)-decenoyl-ACP and then its isomerization to Z-(3)-decenoyl-ACP. Can catalyze the dehydratase reaction for beta-hydroxyacyl-ACPs with saturated chain lengths up to 16:0, being most active on intermediate chain length. This Marinomonas sp. (strain MWYL1) protein is 3-hydroxydecanoyl-[acyl-carrier-protein] dehydratase.